We begin with the raw amino-acid sequence, 148 residues long: Deoxyuridine 5'-triphosphate nucleotidohydrolase (148 aa).

Substrate contacts are provided by residues 67-69, N80, 84-86, and M94; these read RSG and LID.

This sequence belongs to the dUTPase family. It depends on Mg(2+) as a cofactor.

The enzyme catalyses dUTP + H2O = dUMP + diphosphate + H(+). The protein operates within pyrimidine metabolism; dUMP biosynthesis; dUMP from dCTP (dUTP route): step 2/2. Its function is as follows. This enzyme is involved in nucleotide metabolism: it produces dUMP, the immediate precursor of thymidine nucleotides and it decreases the intracellular concentration of dUTP so that uracil cannot be incorporated into DNA. This chain is Deoxyuridine 5'-triphosphate nucleotidohydrolase, found in Burkholderia cenocepacia (strain HI2424).